A 373-amino-acid polypeptide reads, in one-letter code: Lipoyl synthase, mitochondrial (373 aa).

The transit peptide at 1 to 26 directs the protein to the mitochondrion; sequence MALRCWDAARSLGSRIFGRYACSVRA. The [4Fe-4S] cluster site is built by cysteine 105, cysteine 110, cysteine 116, cysteine 136, cysteine 140, cysteine 143, and serine 351. The Radical SAM core domain occupies 121-340; that stretch reads EYATATATIM…EEVGNELGFH (220 aa).

It belongs to the radical SAM superfamily. Lipoyl synthase family. The cofactor is [4Fe-4S] cluster.

Its subcellular location is the mitochondrion. It catalyses the reaction [[Fe-S] cluster scaffold protein carrying a second [4Fe-4S](2+) cluster] + N(6)-octanoyl-L-lysyl-[protein] + 2 oxidized [2Fe-2S]-[ferredoxin] + 2 S-adenosyl-L-methionine + 4 H(+) = [[Fe-S] cluster scaffold protein] + N(6)-[(R)-dihydrolipoyl]-L-lysyl-[protein] + 4 Fe(3+) + 2 hydrogen sulfide + 2 5'-deoxyadenosine + 2 L-methionine + 2 reduced [2Fe-2S]-[ferredoxin]. The protein operates within protein modification; protein lipoylation via endogenous pathway; protein N(6)-(lipoyl)lysine from octanoyl-[acyl-carrier-protein]: step 2/2. Its function is as follows. Catalyzes the radical-mediated insertion of two sulfur atoms into the C-6 and C-8 positions of the octanoyl moiety bound to the lipoyl domains of lipoate-dependent enzymes, thereby converting the octanoylated domains into lipoylated derivatives. The polypeptide is Lipoyl synthase, mitochondrial (Lias) (Rattus norvegicus (Rat)).